The sequence spans 349 residues: tRNA pseudouridine synthase D (349 aa).

Position 27 (F27) interacts with substrate. The active-site Nucleophile is the D80. N129 is a binding site for substrate. In terms of domain architecture, TRUD spans 155–303 (GVPNYFGAQR…VEAARRAMLL (149 aa)). Position 329 (F329) interacts with substrate.

It belongs to the pseudouridine synthase TruD family.

The enzyme catalyses uridine(13) in tRNA = pseudouridine(13) in tRNA. Functionally, responsible for synthesis of pseudouridine from uracil-13 in transfer RNAs. This is tRNA pseudouridine synthase D from Escherichia fergusonii (strain ATCC 35469 / DSM 13698 / CCUG 18766 / IAM 14443 / JCM 21226 / LMG 7866 / NBRC 102419 / NCTC 12128 / CDC 0568-73).